The chain runs to 115 residues: Vitelline membrane protein Vm32E (115 aa).

Positions Met-1–Ala-17 are cleaved as a signal peptide. The VM domain occupies Gly-35 to Thr-72.

The protein belongs to the vitelline membrane family.

It localises to the secreted. Major early eggshell protein. The polypeptide is Vitelline membrane protein Vm32E (Drosophila yakuba (Fruit fly)).